Here is a 653-residue protein sequence, read N- to C-terminus: Chaperone protein DnaK (653 aa).

Phosphothreonine; by autocatalysis is present on threonine 200. A disordered region spans residues 615 to 653 (AEAAAAGAAGAGGAGASAGGASQQQDDVVDAEFKEVKKD). The segment covering 623–632 (AGAGGAGASA) has biased composition (gly residues).

It belongs to the heat shock protein 70 family.

Acts as a chaperone. This chain is Chaperone protein DnaK, found in Paraburkholderia xenovorans (strain LB400).